The sequence spans 397 residues: Digeranylgeranylglycerophospholipid reductase 1 (397 aa).

Residues Ala18, Asp37, Cys48, Ala49, Gly51, Arg104, Ala128, Asp284, Gly296, and Ile297 each contribute to the FAD site.

This sequence belongs to the geranylgeranyl reductase family. DGGGPL reductase subfamily. FAD is required as a cofactor.

It carries out the reaction a 2,3-bis-O-phytanyl-sn-glycerol 1-phospholipid + 8 A = a 2,3-bis-O-(geranylgeranyl)-sn-glycerol 1-phospholipid + 8 AH2. The enzyme catalyses 2,3-bis-O-(phytanyl)-sn-glycerol 1-phosphate + 8 A = 2,3-bis-O-(geranylgeranyl)-sn-glycerol 1-phosphate + 8 AH2. It catalyses the reaction CDP-2,3-bis-O-(geranylgeranyl)-sn-glycerol + 8 AH2 = CDP-2,3-bis-O-(phytanyl)-sn-glycerol + 8 A. The catalysed reaction is archaetidylserine + 8 AH2 = 2,3-bis-O-phytanyl-sn-glycero-3-phospho-L-serine + 8 A. It participates in membrane lipid metabolism; glycerophospholipid metabolism. In terms of biological role, is involved in the reduction of 2,3-digeranylgeranylglycerophospholipids (unsaturated archaeols) into 2,3-diphytanylglycerophospholipids (saturated archaeols) in the biosynthesis of archaeal membrane lipids. Catalyzes the formation of archaetidic acid (2,3-di-O-phytanyl-sn-glyceryl phosphate) from 2,3-di-O-geranylgeranylglyceryl phosphate (DGGGP) via the hydrogenation of each double bond of the isoprenoid chains. Is also probably able to reduce double bonds of geranyl groups in CDP-2,3-bis-O-(geranylgeranyl)-sn-glycerol and archaetidylserine, thus acting at various stages in the biosynthesis of archaeal membrane lipids. This chain is Digeranylgeranylglycerophospholipid reductase 1, found in Methanothermobacter thermautotrophicus (strain ATCC 29096 / DSM 1053 / JCM 10044 / NBRC 100330 / Delta H) (Methanobacterium thermoautotrophicum).